Reading from the N-terminus, the 522-residue chain is Glutathione reductase, mitochondrial (522 aa).

Residues 1–43 (MALLPRALSSGGRPSWRRAARASRGFPLPLPFPAAATHALSRA) constitute a mitochondrion transit peptide. FAD contacts are provided by S74 and G75. S74 contributes to the glutathione binding site. Glutathione is bound at residue R81. E94 serves as a coordination point for FAD. K97 is subject to N6-acetyllysine. 3 residues coordinate FAD: T101, C102, and K110. C102 and C107 are oxidised to a cystine. Position 158 (Y158) interacts with glutathione. A174 is an FAD binding site. NADP(+) is bound by residues A239, I242, E245, R262, R268, and G334. FAD is bound at residue D375. Position 381 (L381) interacts with NADP(+). T383 lines the FAD pocket. Position 391 (R391) interacts with glutathione. Residue V414 participates in NADP(+) binding. H511 contacts FAD. H511 acts as the Proton acceptor in catalysis.

The protein belongs to the class-I pyridine nucleotide-disulfide oxidoreductase family. Homodimer; disulfide-linked. It depends on FAD as a cofactor.

Its subcellular location is the mitochondrion. The protein resides in the cytoplasm. It carries out the reaction 2 glutathione + NADP(+) = glutathione disulfide + NADPH + H(+). Functionally, catalyzes the reduction of glutathione disulfide (GSSG) to reduced glutathione (GSH). Constitutes the major mechanism to maintain a high GSH:GSSG ratio in the cytosol. This Callithrix jacchus (White-tufted-ear marmoset) protein is Glutathione reductase, mitochondrial (GSR).